The primary structure comprises 357 residues: Protein-glutamate methylesterase/protein-glutamine glutaminase 1 (357 aa).

In terms of domain architecture, Response regulatory spans 7–124; the sequence is KVLCVDDSAL…REGLLDYTQT (118 aa). Aspartate 58 carries the 4-aspartylphosphate modification. A CheB-type methylesterase domain is found at 158–350; the sequence is LLSTEKLIIV…QRVMAHLATF (193 aa). Active-site residues include serine 170, histidine 196, and aspartate 292.

The protein belongs to the CheB family. Post-translationally, phosphorylated by CheA. Phosphorylation of the N-terminal regulatory domain activates the methylesterase activity.

The protein localises to the cytoplasm. The catalysed reaction is [protein]-L-glutamate 5-O-methyl ester + H2O = L-glutamyl-[protein] + methanol + H(+). It carries out the reaction L-glutaminyl-[protein] + H2O = L-glutamyl-[protein] + NH4(+). Its function is as follows. Involved in chemotaxis. Part of a chemotaxis signal transduction system that modulates chemotaxis in response to various stimuli. Catalyzes the demethylation of specific methylglutamate residues introduced into the chemoreceptors (methyl-accepting chemotaxis proteins or MCP) by CheR. Also mediates the irreversible deamidation of specific glutamine residues to glutamic acid. The chain is Protein-glutamate methylesterase/protein-glutamine glutaminase 1 from Cupriavidus metallidurans (strain ATCC 43123 / DSM 2839 / NBRC 102507 / CH34) (Ralstonia metallidurans).